Here is a 179-residue protein sequence, read N- to C-terminus: Large ribosomal subunit protein uL6 (179 aa).

The protein belongs to the universal ribosomal protein uL6 family. As to quaternary structure, part of the 50S ribosomal subunit.

This protein binds to the 23S rRNA, and is important in its secondary structure. It is located near the subunit interface in the base of the L7/L12 stalk, and near the tRNA binding site of the peptidyltransferase center. The chain is Large ribosomal subunit protein uL6 from Prochlorococcus marinus (strain SARG / CCMP1375 / SS120).